We begin with the raw amino-acid sequence, 218 residues long: 3,4-dihydroxy-2-butanone 4-phosphate synthase (218 aa).

Residues 38 to 39, D43, 151 to 155, and E175 contribute to the D-ribulose 5-phosphate site; these read RE and RRGHT. E39 contributes to the Mg(2+) binding site. H154 lines the Mg(2+) pocket.

It belongs to the DHBP synthase family. Homodimer. It depends on Mg(2+) as a cofactor. Requires Mn(2+) as cofactor.

The enzyme catalyses D-ribulose 5-phosphate = (2S)-2-hydroxy-3-oxobutyl phosphate + formate + H(+). The protein operates within cofactor biosynthesis; riboflavin biosynthesis; 2-hydroxy-3-oxobutyl phosphate from D-ribulose 5-phosphate: step 1/1. Functionally, catalyzes the conversion of D-ribulose 5-phosphate to formate and 3,4-dihydroxy-2-butanone 4-phosphate. The protein is 3,4-dihydroxy-2-butanone 4-phosphate synthase of Vibrio cholerae serotype O1 (strain M66-2).